Here is a 450-residue protein sequence, read N- to C-terminus: MSIINSIDCHVIGIYFYNVILEKNLIIWQLNIITCSSHESTFCFVVDLLTAEDRDSILRVCSDQPTPQHHGVSLMTWELKLRMSQPILQTCMNNIRKPITILMSTDKVALEARPVLEKEACSGRYLKGAYLYSQCSQILASVPKLTLENNVQQWYPYLLNNSTIEDLEIHIKCSEGLYTCSSNSEPPLKKTQHLKIEDVFKIVDHSFLVAKTNIHIRTVIPIFHLLWVNVECKWNGCLPEFFRALHSKVYREFTGIAPIFTYLFPGGCPEATPFDIYFCGFPFVNLNCGKPEKILLCDLPRLHCPQILLSIPGNHADDLLCQPRDIPLPSIPKIWPINGIDINSKFCLEETSEIAFLNFKHIIVEVDFLCTICYIMGCKSDEIYNIMKFGSNNLNSTLQTWYNWFISTIFKWATQRSFNWTAMTQFKVYLSAVYASEIPKVSYKLVKDYE.

Belongs to the herpesviridae BBLF2 family.

This is an uncharacterized protein from Saimiriine herpesvirus 2 (strain 11) (SaHV-2).